Reading from the N-terminus, the 419-residue chain is Gamma-glutamyl phosphate reductase (419 aa).

Belongs to the gamma-glutamyl phosphate reductase family.

Its subcellular location is the cytoplasm. It carries out the reaction L-glutamate 5-semialdehyde + phosphate + NADP(+) = L-glutamyl 5-phosphate + NADPH + H(+). It participates in amino-acid biosynthesis; L-proline biosynthesis; L-glutamate 5-semialdehyde from L-glutamate: step 2/2. Functionally, catalyzes the NADPH-dependent reduction of L-glutamate 5-phosphate into L-glutamate 5-semialdehyde and phosphate. The product spontaneously undergoes cyclization to form 1-pyrroline-5-carboxylate. This is Gamma-glutamyl phosphate reductase from Yersinia enterocolitica serotype O:8 / biotype 1B (strain NCTC 13174 / 8081).